A 131-amino-acid chain; its full sequence is Profilin-2 (131 aa).

Residues Cys-13 and Cys-115 are joined by a disulfide bond. An Involved in PIP2 interaction motif is present at residues 81-97; sequence AVIRGKKGPGGVTVKKT. Thr-111 is modified (phosphothreonine).

It belongs to the profilin family. Multimer. Occurs in many kinds of cells as a complex with monomeric actin in a 1:1 ratio. Phosphorylated by MAP kinases.

The protein localises to the cytoplasm. It localises to the cytoskeleton. Functionally, binds to actin and affects the structure of the cytoskeleton. At high concentrations, profilin prevents the polymerization of actin, whereas it enhances it at low concentrations. By binding to PIP2, it inhibits the formation of IP3 and DG. In Hevea brasiliensis (Para rubber tree), this protein is Profilin-2.